Here is a 226-residue protein sequence, read N- to C-terminus: Uracil-DNA glycosylase (226 aa).

The Proton acceptor role is filled by D65.

Belongs to the uracil-DNA glycosylase (UDG) superfamily. UNG family.

Its subcellular location is the cytoplasm. The enzyme catalyses Hydrolyzes single-stranded DNA or mismatched double-stranded DNA and polynucleotides, releasing free uracil.. In terms of biological role, excises uracil residues from the DNA which can arise as a result of misincorporation of dUMP residues by DNA polymerase or due to deamination of cytosine. In Enterococcus faecalis (strain ATCC 700802 / V583), this protein is Uracil-DNA glycosylase.